The sequence spans 428 residues: Aspartate--tRNA(Asp) ligase (428 aa).

Residue Glu166 coordinates L-aspartate. Residues 188–191 are aspartate; sequence QLYK. Arg210 lines the L-aspartate pocket. Residues 210–212, 218–220, and Glu351 contribute to the ATP site; these read RAE and RHL. Mg(2+)-binding residues include Glu351 and Ser354. Residues Ser354 and Arg358 each coordinate L-aspartate. 399–402 provides a ligand contact to ATP; sequence GLER.

This sequence belongs to the class-II aminoacyl-tRNA synthetase family. Type 2 subfamily. Homodimer. Mg(2+) is required as a cofactor.

It is found in the cytoplasm. The catalysed reaction is tRNA(Asp) + L-aspartate + ATP = L-aspartyl-tRNA(Asp) + AMP + diphosphate. Functionally, catalyzes the attachment of L-aspartate to tRNA(Asp) in a two-step reaction: L-aspartate is first activated by ATP to form Asp-AMP and then transferred to the acceptor end of tRNA(Asp). This is Aspartate--tRNA(Asp) ligase from Thermoplasma acidophilum (strain ATCC 25905 / DSM 1728 / JCM 9062 / NBRC 15155 / AMRC-C165).